The primary structure comprises 88 residues: Conotoxin VxVIB (88 aa).

The signal sequence occupies residues 1–22; it reads MNLACVLIVAVLFLTASQLATA. Positions 23–52 are excised as a propeptide; it reads ASYARDKQEYPAVRSSDEMQDSEDLTLTKE. Disulfide bonds link Cys53–Cys68, Cys60–Cys72, and Cys67–Cys81.

As to expression, expressed by the venom duct.

Its subcellular location is the secreted. May act as a neurotoxin, but produces no obvious effect on ionic currents when tested on the mouse dorsal rooted ganglia (DRG). This chain is Conotoxin VxVIB, found in Conus vexillum (Flag cone).